The sequence spans 173 residues: NADH-ubiquinone oxidoreductase chain 6 (173 aa).

The next 5 membrane-spanning stretches (helical) occupy residues 1–21, 25–45, 53–73, 87–107, and 139–159; these read MAYIMLTLLIGMVLGVISVAS, PYFAALGLVLVAGVGCVVLMG, LVLFLIYLGGMLVVFAYCAAL, VLGSVLGYLLLVVGAGSWFWG, and LGGGLLVVSAWVLLLTLLVVL.

Belongs to the complex I subunit 6 family.

Its subcellular location is the mitochondrion membrane. It catalyses the reaction a ubiquinone + NADH + 5 H(+)(in) = a ubiquinol + NAD(+) + 4 H(+)(out). In terms of biological role, core subunit of the mitochondrial membrane respiratory chain NADH dehydrogenase (Complex I) that is believed to belong to the minimal assembly required for catalysis. Complex I functions in the transfer of electrons from NADH to the respiratory chain. The immediate electron acceptor for the enzyme is believed to be ubiquinone. The chain is NADH-ubiquinone oxidoreductase chain 6 (MT-ND6) from Gadus morhua (Atlantic cod).